The sequence spans 98 residues: MALTKAEMSEHLFEKLGLSKRDAKDLVELFFEEVRRALENGEQVKLSGFGNFDLRDKNQRPGRNPKTGEDIPITARRVVTFRPGQKLKSRVESATPKE.

The segment at 49-70 (FGNFDLRDKNQRPGRNPKTGED) is disordered.

Belongs to the bacterial histone-like protein family. In terms of assembly, heterodimer of an alpha and a beta chain.

Functionally, this protein is one of the two subunits of integration host factor, a specific DNA-binding protein that functions in genetic recombination as well as in transcriptional and translational control. The protein is Integration host factor subunit alpha of Yersinia pestis.